Reading from the N-terminus, the 371-residue chain is MSTSSSTARTYRITALAGDGIGPEIMRVGRAVLDAVARQMGFALQWQEGLIGGAAYDQTGDPLPAETLKMAQESDAVYLAAVGDFKYDALPPEKRPERALLGLRAGLGLFANLRPVKVFPQLVGASSLKPEVIAGIDLVVVRELTGGIYFGQPKGIFTDAQGSRRGVNTMVYSEAEVDRIARVAFELARKRRRKLCSVDKANVLEVSQLWRERVNAIAAEYPEVELSHLYIDNAAMQLVRWPKQFDVILTGNLFGDILSDEAAMLTGSIGMLPSASLGSSGPGLYEPVHGSAPDIAGQDKANPIAQVLSGALMLRYSLDQPQAADRIEQAVEAVLAQGYRTPDLYSEGMTLVGCQEMGEKLVAALSQQQAQ.

Substrate contacts are provided by arginine 104, arginine 114, arginine 142, and aspartate 232. Mg(2+) is bound by residues aspartate 232, aspartate 256, and aspartate 260. 290–302 (GSAPDIAGQDKAN) contributes to the NAD(+) binding site.

The protein belongs to the isocitrate and isopropylmalate dehydrogenases family. LeuB type 1 subfamily. As to quaternary structure, homodimer. Requires Mg(2+) as cofactor. The cofactor is Mn(2+).

The protein localises to the cytoplasm. It carries out the reaction (2R,3S)-3-isopropylmalate + NAD(+) = 4-methyl-2-oxopentanoate + CO2 + NADH. The protein operates within amino-acid biosynthesis; L-leucine biosynthesis; L-leucine from 3-methyl-2-oxobutanoate: step 3/4. Functionally, catalyzes the oxidation of 3-carboxy-2-hydroxy-4-methylpentanoate (3-isopropylmalate) to 3-carboxy-4-methyl-2-oxopentanoate. The product decarboxylates to 4-methyl-2 oxopentanoate. The sequence is that of 3-isopropylmalate dehydrogenase from Synechococcus sp. (strain JA-2-3B'a(2-13)) (Cyanobacteria bacterium Yellowstone B-Prime).